The sequence spans 141 residues: Putative nickel-responsive regulator (141 aa).

Residues H80, H91, H93, and C99 each coordinate Ni(2+).

Belongs to the transcriptional regulatory CopG/NikR family. Ni(2+) is required as a cofactor.

Its function is as follows. Transcriptional regulator. The sequence is that of Putative nickel-responsive regulator from Methanococcus aeolicus (strain ATCC BAA-1280 / DSM 17508 / OCM 812 / Nankai-3).